Consider the following 255-residue polypeptide: Phosphoribosylaminoimidazole-succinocarboxamide synthase A (255 aa).

This sequence belongs to the SAICAR synthetase family.

It carries out the reaction 5-amino-1-(5-phospho-D-ribosyl)imidazole-4-carboxylate + L-aspartate + ATP = (2S)-2-[5-amino-1-(5-phospho-beta-D-ribosyl)imidazole-4-carboxamido]succinate + ADP + phosphate + 2 H(+). The protein operates within purine metabolism; IMP biosynthesis via de novo pathway; 5-amino-1-(5-phospho-D-ribosyl)imidazole-4-carboxamide from 5-amino-1-(5-phospho-D-ribosyl)imidazole-4-carboxylate: step 1/2. This is Phosphoribosylaminoimidazole-succinocarboxamide synthase A (purC1) from Bradyrhizobium diazoefficiens (strain JCM 10833 / BCRC 13528 / IAM 13628 / NBRC 14792 / USDA 110).